Here is a 43-residue protein sequence, read N- to C-terminus: Protein PsbN (43 aa).

The chain crosses the membrane as a helical span at residues 7–29 (ITIFLSGLLVSFTGYALYTAFGQ).

Belongs to the PsbN family.

It is found in the plastid membrane. Its function is as follows. May play a role in photosystem I and II biogenesis. In Cuscuta reflexa (Southern Asian dodder), this protein is Protein PsbN.